The chain runs to 106 residues: Protein aveugle (106 aa).

The region spanning 26 to 91 is the SAM domain; it reads WTVSDVLKWY…WREIVKQRLK (66 aa).

As to quaternary structure, interacts with the SAM domain of cnk.

It localises to the cytoplasm. Its subcellular location is the membrane. Functionally, required for normal photoreceptor differentiation between Ras and Raf for EGFR signaling in the eye and for mitogen-activated protein kinase phosphorylation. Probably acts together with Cnk to promote Raf activation, perhaps by recruiting an activating kinase. The chain is Protein aveugle (ave) from Drosophila melanogaster (Fruit fly).